A 506-amino-acid polypeptide reads, in one-letter code: Histidine ammonia-lyase (506 aa).

Positions 144 to 146 (ASG) form a cross-link, 5-imidazolinone (Ala-Gly). S145 bears the 2,3-didehydroalanine (Ser) mark.

This sequence belongs to the PAL/histidase family. Contains an active site 4-methylidene-imidazol-5-one (MIO), which is formed autocatalytically by cyclization and dehydration of residues Ala-Ser-Gly.

The protein localises to the cytoplasm. It catalyses the reaction L-histidine = trans-urocanate + NH4(+). It participates in amino-acid degradation; L-histidine degradation into L-glutamate; N-formimidoyl-L-glutamate from L-histidine: step 1/3. The sequence is that of Histidine ammonia-lyase from Legionella pneumophila (strain Paris).